A 347-amino-acid chain; its full sequence is Protein RecA (347 aa).

Position 65-72 (65-72 (GPESSGKT)) interacts with ATP.

This sequence belongs to the RecA family.

Its subcellular location is the cytoplasm. Functionally, can catalyze the hydrolysis of ATP in the presence of single-stranded DNA, the ATP-dependent uptake of single-stranded DNA by duplex DNA, and the ATP-dependent hybridization of homologous single-stranded DNAs. It interacts with LexA causing its activation and leading to its autocatalytic cleavage. This chain is Protein RecA, found in Aliivibrio salmonicida (strain LFI1238) (Vibrio salmonicida (strain LFI1238)).